Here is a 211-residue protein sequence, read N- to C-terminus: Protein-L-isoaspartate O-methyltransferase (211 aa).

The active site involves Ser62.

This sequence belongs to the methyltransferase superfamily. L-isoaspartyl/D-aspartyl protein methyltransferase family.

The protein resides in the cytoplasm. The enzyme catalyses [protein]-L-isoaspartate + S-adenosyl-L-methionine = [protein]-L-isoaspartate alpha-methyl ester + S-adenosyl-L-homocysteine. In terms of biological role, catalyzes the methyl esterification of L-isoaspartyl residues in peptides and proteins that result from spontaneous decomposition of normal L-aspartyl and L-asparaginyl residues. It plays a role in the repair and/or degradation of damaged proteins. The chain is Protein-L-isoaspartate O-methyltransferase from Shewanella frigidimarina (strain NCIMB 400).